The following is a 166-amino-acid chain: CDP-archaeol synthase (166 aa).

5 helical membrane-spanning segments follow: residues 7–27 (LLLSILIYLPAFVANGSGPFI), 55–75 (LIVALTFGTTVGVIISKFFTA), 78–98 (TLISFLESLFAMIGDMIGAFI), 116–136 (LDFVLGASLILVLMRVNITWY), and 138–158 (FLFICGLAFFLHQGTNYVAYL).

The protein belongs to the CDP-archaeol synthase family. Requires Mg(2+) as cofactor.

The protein resides in the cell membrane. The enzyme catalyses 2,3-bis-O-(geranylgeranyl)-sn-glycerol 1-phosphate + CTP + H(+) = CDP-2,3-bis-O-(geranylgeranyl)-sn-glycerol + diphosphate. Its pathway is membrane lipid metabolism; glycerophospholipid metabolism. In terms of biological role, catalyzes the formation of CDP-2,3-bis-(O-geranylgeranyl)-sn-glycerol (CDP-archaeol) from 2,3-bis-(O-geranylgeranyl)-sn-glycerol 1-phosphate (DGGGP) and CTP. This reaction is the third ether-bond-formation step in the biosynthesis of archaeal membrane lipids. This Saccharolobus islandicus (strain L.S.2.15 / Lassen #1) (Sulfolobus islandicus) protein is CDP-archaeol synthase.